A 642-amino-acid chain; its full sequence is Poly(A) polymerase beta (642 aa).

Residues 101–103 (FGS), threonine 110, 114–116 (DID), aspartate 168, lysine 229, tyrosine 238, and 247–248 (GV) contribute to the ATP site. The Mg(2+) site is built by aspartate 114, aspartate 116, and aspartate 168. 2 disordered regions span residues 530-553 (SENS…GNPQ) and 620-642 (LVNH…ILGV). A compositionally biased stretch (polar residues) spans 620 to 636 (LVNHPSRPSGNTATNIP).

It belongs to the poly(A) polymerase family. In terms of assembly, interacts with GSG1. Requires Mg(2+) as cofactor. The cofactor is Mn(2+). In terms of tissue distribution, testis specific.

The protein localises to the cytoplasm. It is found in the nucleus. It carries out the reaction RNA(n) + ATP = RNA(n)-3'-adenine ribonucleotide + diphosphate. This Mus musculus (Mouse) protein is Poly(A) polymerase beta.